We begin with the raw amino-acid sequence, 88 residues long: Large ribosomal subunit protein bL27 (88 aa).

The disordered stretch occupies residues 1–21; the sequence is MAHKKGQGSTQNNRDSAGRRL.

This sequence belongs to the bacterial ribosomal protein bL27 family.

The chain is Large ribosomal subunit protein bL27 from Helicobacter acinonychis (strain Sheeba).